A 436-amino-acid polypeptide reads, in one-letter code: Testis-expressed protein 44 (436 aa).

Acidic residues-rich tracts occupy residues 1-10 (MTTEPLEDPE) and 45-54 (LPDEVPPEDI). Disordered regions lie at residues 1 to 142 (MTTE…LTSL) and 165 to 307 (AENN…SLYG). Polar residues-rich tracts occupy residues 81 to 103 (ASMQIATSMGQNKDRASMQTDTS) and 167 to 195 (NNRTSRSRTVSPSDSQTQEKTSGKSTVSE). Over residues 234 to 247 (EPTKSADQEAEDFK) the composition is skewed to basic and acidic residues. Over residues 273–289 (QAPPSPNSPADSPPPSP) the composition is skewed to pro residues. Position 375 is a phosphoserine (serine 375).

The protein resides in the cytoplasm. The polypeptide is Testis-expressed protein 44 (Tex44) (Rattus norvegicus (Rat)).